The sequence spans 300 residues: 3-dehydrocarnitine:acetyl-CoA trimethylamine transferase (300 aa).

Zn(2+) is bound by residues His-51, His-53, and Glu-254.

This sequence belongs to the BKACE family. In terms of assembly, homotetramer. Zn(2+) serves as cofactor.

It catalyses the reaction 3-dehydrocarnitine + acetyl-CoA = N,N,N-trimethylglycyl-CoA + acetoacetate. Its pathway is amine and polyamine metabolism; carnitine metabolism. Functionally, catalyzes the condensation of dehydrocarnitine and acetyl-CoA, forming acetoacetate and betainyl-CoA (N,N,N-trimethylglycyl-CoA). Is involved in a L-carnitine degradation pathway that allows R.meliloti to grow on L-carnitine as the sole source of carbon and nitrogen. This chain is 3-dehydrocarnitine:acetyl-CoA trimethylamine transferase, found in Rhizobium meliloti (strain 1021) (Ensifer meliloti).